We begin with the raw amino-acid sequence, 449 residues long: Protein cortex (449 aa).

WD repeat units lie at residues 108–148 (TYSY…ISQG), 149–188 (YAEYQIQCCKFDPRGELLLLGTYMKTVEIHNNVKSKKIDS), 198–237 (NRNCSITAVDWSPTGNSFATGCSWGAVTSFTRAAKLISWR), 283–327 (DSDW…VRDT), 345–382 (TGELVLSMWNSDRAILHPKACSQLVVMSDPDTMVDQWG), and 386–425 (SGLDRVRTMVFSPDGTKLATATSDEDLIIWNFLPEDKKMK). Positions 386 to 397 (SGLDRVRTMVFS) match the D-box motif.

This sequence belongs to the WD repeat CORT family.

It is found in the cytoplasm. Functionally, controls wing pigmentation patterning by regulating scale cell development, thereby playing a key role in mimicry and crypsis. Probably acts as an activator of the anaphase promoting complex/cyclosome (APC/C) that promotes the ubiquitin ligase activity and substrate specificity of the APC/C. This Heliconius erato (Crimson patched longwing butterfly) protein is Protein cortex.